A 467-amino-acid polypeptide reads, in one-letter code: Tubulointerstitial nephritis antigen-like (467 aa).

The first 21 residues, methionine 1–alanine 21, serve as a signal peptide directing secretion. Positions glutamate 49–proline 96 constitute an SMB domain. Cystine bridges form between cysteine 53/cysteine 72, cysteine 70/cysteine 72, cysteine 70/cysteine 84, cysteine 76/cysteine 83, and cysteine 84/cysteine 91. N-linked (GlcNAc...) asparagine glycosylation is present at asparagine 77. Asparagine 160 is a glycosylation site (N-linked (GlcNAc...) asparagine).

The protein belongs to the peptidase C1 family. Post-translationally, glycosylated.

The protein resides in the secreted. In terms of biological role, may be implicated in the adrenocortical zonation and in mechanisms for repressing the CYP11B1 gene expression in adrenocortical cells. This is a non catalytic peptidase C1 family protein. This Rattus norvegicus (Rat) protein is Tubulointerstitial nephritis antigen-like (Tinagl1).